The sequence spans 111 residues: Putative gamma-glutamylcyclotransferase BH1612 (111 aa).

14–17 (YGHL) contacts substrate. Residue Glu55 is the Proton acceptor of the active site.

It belongs to the gamma-glutamylcyclotransferase family.

Putative gamma-glutamylcyclotransferase. This is Putative gamma-glutamylcyclotransferase BH1612 from Halalkalibacterium halodurans (strain ATCC BAA-125 / DSM 18197 / FERM 7344 / JCM 9153 / C-125) (Bacillus halodurans).